Here is a 412-residue protein sequence, read N- to C-terminus: Nuclear hormone receptor family member nhr-61 (412 aa).

Residues 1–19 (MIVDSISSSTASTSSSSPT) show a composition bias toward low complexity. The interval 1 to 23 (MIVDSISSSTASTSSSSPTRGTP) is disordered. A DNA-binding region (nuclear receptor) is located at residues 27 to 102 (SLQCAVCGDV…VGMNPRAVQG (76 aa)). 2 NR C4-type zinc fingers span residues 30–50 (CAVCGDVALGKHYGVNACNGC) and 66–90 (CRHGGKCLVAKEQRNACRSCRLTRC). Positions 144–407 (KKEQIIDNLR…DWSQELRDHR (264 aa)) constitute an NR LBD domain.

This sequence belongs to the nuclear hormone receptor family.

It localises to the nucleus. In terms of biological role, orphan nuclear receptor. The protein is Nuclear hormone receptor family member nhr-61 (nhr-61) of Caenorhabditis elegans.